A 1088-amino-acid polypeptide reads, in one-letter code: Probable cellulose synthase A catalytic subunit 9 [UDP-forming] (1088 aa).

At Met-1 the chain carries N-acetylmethionine. Over 1-283 (MNTGGRLIAG…RSSRINPYRM (283 aa)) the chain is Cytoplasmic. Cys-39, Cys-42, Cys-58, Cys-61, Cys-66, Cys-69, Cys-81, and Cys-84 together coordinate Zn(2+). The RING-type; degenerate zinc finger occupies 39–85 (CKICRDEIELTDNGEPFIACNECAFPTCRPCYEYERREGNQACPQCG). A helical membrane pass occupies residues 284–304 (LIFCRLAILGLFFHYRILHPV). Residues 305 to 306 (ND) are Extracellular-facing. Residues 307–327 (AFGLWLTSVICEIWFAVSWIL) traverse the membrane as a helical segment. The Cytoplasmic portion of the chain corresponds to 328-871 (DQFPKWYPIE…INSVVYPWTS (544 aa)). Residues Ser-366, Lys-372, Glu-373, Asp-402, and Lys-543 each coordinate UDP-alpha-D-glucose. Residue Asp-402 is part of the active site. The Mn(2+) site is built by Lys-544 and Asp-568. Asp-788 is a catalytic residue. A helical transmembrane segment spans residues 872 to 892 (LPLLVYCSLPAICLLTGKFIV). Topologically, residues 893–897 (PEISN) are extracellular. A helical transmembrane segment spans residues 898–918 (YAGILFLLMFMSIAVTGILEM). Over 919–933 (QWGKIGIDDWWRNEQ) the chain is Cytoplasmic. The chain crosses the membrane as a helical span at residues 934–954 (FWVIGGVSSHLFALFQGLLKV). At 955 to 983 (LAGVSTNFTVTSKAADDGEFSELYIFKWT) the chain is on the extracellular side. An N-linked (GlcNAc...) asparagine glycan is attached at Asn-961. The helical transmembrane segment at 984-1004 (SLLIPPTTLLIINIVGVIVGV) threads the bilayer. The Cytoplasmic portion of the chain corresponds to 1005 to 1015 (SDAINNGYDSW). The helical transmembrane segment at 1016–1036 (GPLFGRLFFALWVIVHLYPFL) threads the bilayer. Over 1037–1045 (KGLLGKQDR) the chain is Extracellular. Residues 1046 to 1066 (VPTIILVWSILLASILTLLWV) traverse the membrane as a helical segment. At 1067 to 1088 (RVNPFVSKDGPVLEICGLDCLK) the chain is on the cytoplasmic side.

Belongs to the glycosyltransferase 2 family. Plant cellulose synthase subfamily. Requires Mn(2+) as cofactor. Zn(2+) serves as cofactor. As to expression, expressed in young plants, stems and flowers.

It localises to the cell membrane. It catalyses the reaction [(1-&gt;4)-beta-D-glucosyl](n) + UDP-alpha-D-glucose = [(1-&gt;4)-beta-D-glucosyl](n+1) + UDP + H(+). It participates in glycan metabolism; plant cellulose biosynthesis. Probable catalytic subunit of cellulose synthase terminal complexes ('rosettes'), required for beta-1,4-glucan microfibril crystallization, a major mechanism of the cell wall formation. The polypeptide is Probable cellulose synthase A catalytic subunit 9 [UDP-forming] (Arabidopsis thaliana (Mouse-ear cress)).